The primary structure comprises 120 residues: A-type ATP synthase subunit F (120 aa).

It belongs to the V-ATPase F subunit family. Has multiple subunits with at least A(3), B(3), C, D, E, F, H, I and proteolipid K(x).

The protein localises to the cell membrane. Functionally, component of the A-type ATP synthase that produces ATP from ADP in the presence of a proton gradient across the membrane. This chain is A-type ATP synthase subunit F, found in Halobacterium salinarum (strain ATCC 29341 / DSM 671 / R1).